Consider the following 188-residue polypeptide: MPLREFKIVVLGSGGVGKSALTVQFVQGIFVEKYDPTIEDSYRKQVEVDGQQCMLEILDTAGTEQFTAMRDLYMKNGQGFVLVYSIIAMSTFNDLPDLREQILRVKDCDDVPMVLVGNKCDLAEQRVISTEQGDELARKFGGCAFLEASAKNKINVEQIFYDLIRQINRKNPGPTNKKEKKSGGCILL.

A GTP-binding site is contributed by 12–19 (GSGGVGKS). The short motif at 34 to 42 (YDPTIEDSY) is the Effector region element. Residues 59 to 63 (DTAGT) and 118 to 121 (NKCD) each bind GTP. C185 is modified (cysteine methyl ester). C185 is lipidated: S-geranylgeranyl cysteine. Residues 186–188 (ILL) constitute a propeptide, removed in mature form.

Belongs to the small GTPase superfamily. Ras family.

It is found in the cell membrane. The enzyme catalyses GTP + H2O = GDP + phosphate + H(+). The chain is Ras-related protein Rap-1 (RAP1) from Physarum polycephalum (Slime mold).